The sequence spans 190 residues: Lipocalin Can f 6.0101 (190 aa).

Residues 1–15 form the signal peptide; it reads MKLLLLCLGLILVHA. Positions 43–54 are igE-binding; that stretch reads SDIKEKIEENGS. N-linked (GlcNAc...) asparagine glycosylation is found at Asn52 and Asn67. The segment at 76-83 is igE-binding; that stretch reads TKVNGKCT. Cys82 and Cys175 are joined by a disulfide. The N-linked (GlcNAc...) asparagine glycan is linked to Asn90. The interval 91–97 is igE-binding; sequence KTEKDGE. The tract at residues 100–109 is no IgE-binding; it reads VVHDGYNLFR. IgE-binding stretches follow at residues 125-132 and 139-152; these read NVNQEQEF and GRKPDVSPKVKEKF.

The protein belongs to the calycin superfamily. Lipocalin family. As to quaternary structure, monomer. In terms of tissue distribution, expressed in saliva (at protein level). Expressed in dander (at protein level). According to PubMed:22104604, expressed in submaxillary gland. In contrast, according to PubMed:22515174, not expressed in submaxillary gland. Expressed in bladder and skin, but not in tongue.

Its subcellular location is the secreted. The protein is Lipocalin Can f 6.0101 of Canis lupus familiaris (Dog).